A 160-amino-acid chain; its full sequence is Epithelial membrane protein 1 (160 aa).

The chain crosses the membrane as a helical span at residues 1–21 (MLVLLAAIFVVHIATCVMLFV). N35 and N43 each carry an N-linked (GlcNAc...) asparagine glycan. Helical transmembrane passes span 67–87 (FMILSIIFSVISLIIFVFQLF), 95–115 (FFLSGATMLVCWLCVLIGASI), and 137–157 (FILAWICFCFSFVVGVLYLVL).

The protein belongs to the PMP-22/EMP/MP20 family. As to expression, most abundant in squamous epithelia.

It localises to the membrane. This Oryctolagus cuniculus (Rabbit) protein is Epithelial membrane protein 1 (EMP1).